We begin with the raw amino-acid sequence, 488 residues long: Bile acid receptor (488 aa).

K133 is covalently cross-linked (Glycyl lysine isopeptide (Lys-Gly) (interchain with G-Cter in SUMO1)). The segment at residues 135 to 210 is a DNA-binding region (nuclear receptor); it reads DELCVVCGDR…MGMLAECMYT (76 aa). The segment at 138 to 158 adopts an NR C4-type zinc-finger fold; sequence CVVCGDRASGYHYNALTCEGC. Residues S146 and S165 each carry the phosphoserine; by PKC/PRKCA modification. K168 bears the N6-acetyllysine; by EP300 mark. The NR C4-type zinc finger occupies 174–198; that stretch reads CKNGGNCVMDMYMRRKCQECRLRKC. K221 carries the N6-methyllysine; by SETD7 modification. K228 carries the post-translational modification N6-acetyllysine; by EP300. An NR LBD domain is found at 264–488; that stretch reads DQQTLLDYIM…PLLCEIWDVQ (225 aa). K291 participates in a covalent cross-link: Glycyl lysine isopeptide (Lys-Gly) (interchain with G-Cter in SUMO1). Chenodeoxycholate is bound by residues R347, Y377, and Y385. T458 is modified (phosphothreonine; by PKC/PRKCZ). Residue H463 participates in chenodeoxycholate binding.

The protein belongs to the nuclear hormone receptor family. NR1 subfamily. In terms of assembly, heterodimer with RXRA; the heterodimerization enhances the binding affinity for LXXLL motifs from coactivators. Binds DNA predominantly as a heterodimer with RXRA. After activation by agonist binding interacts with coactivators. Interacts with PPARGC1A, SMARCA4 and EP300. Interacts with NCOA1, NCOA2, CARM1, SETD7, PRMT1, GPS2, SMARCA4 and MED1. Interacts with XRCC5 and XRCC6; decreasing NR1H4/FXR transactivation activity towards ABCB11/BSEP. Interacts with PAGR1 and NCOA6; indicative for an association with an MLL2/MLL3 complex (ASCOM). Interacts with NR5A2. In terms of processing, acetylated by EP300. Lys-228 as is the major acetylation site for EP300; the dynamicly regulated acetylation inhibits heterodimerization with RXRA and transactivation activity. Deacetylated by SIRT1. Elevated acetylation levels are found in metabolic disease states (mouse models of obesity and type II diabetes). Methylation may increase transactivation of target genes. Post-translationally, phosphorylation by PKC/PRKCA increases transactivation activity by promoting association with PPARGC1A. In terms of processing, sumoylated upon ligand binding. In terms of tissue distribution, expressed in liver and kidney. Expressed in pancreatic beta cells and macrophages. Expressed in the villus epithelium in adult ileum, with highest expression in the intervillus regions. Expression in colon is reduced by inflammation.

Its subcellular location is the nucleus. Functionally, ligand-activated transcription factor. Receptor for bile acids (BAs) such as chenodeoxycholic acid (CDCA), lithocholic acid, deoxycholic acid (DCA) and allocholic acid (ACA). Plays a essential role in BA homeostasis through the regulation of genes involved in BA synthesis, conjugation and enterohepatic circulation. Also regulates lipid and glucose homeostasis and is involved in innate immune response. The FXR-RXR heterodimer binds predominantly to farnesoid X receptor response elements (FXREs) containing two inverted repeats of the consensus sequence 5'-AGGTCA-3' in which the monomers are spaced by 1 nucleotide (IR-1) but also to tandem repeat DR1 sites with lower affinity, and can be activated by either FXR or RXR-specific ligands. It is proposed that monomeric nuclear receptors such as NR5A2/LRH-1 bound to coregulatory nuclear responsive element (NRE) halfsites located in close proximity to FXREs modulate transcriptional activity. In the liver activates transcription of the corepressor NR0B2 thereby indirectly inhibiting CYP7A1 and CYP8B1 (involved in BA synthesis) implicating at least in part histone demethylase KDM1A resulting in epigenomic repression, and SLC10A1/NTCP (involved in hepatic uptake of conjugated BAs). Activates transcription of the repressor MAFG (involved in regulation of BA synthesis). Activates transcription of SLC27A5/BACS and BAAT (involved in BA conjugation), ABCB11/BSEP (involved in bile salt export) by directly recruiting histone methyltransferase CARM1, and ABCC2/MRP2 (involved in secretion of conjugated BAs) and ABCB4 (involved in secretion of phosphatidylcholine in the small intestine). In ileal enterocytes activates FABP6/IBABP (involved in cytosolic transport), SLC51A/OSTA and SLC51B/OSTB (involved in secretion of conjugated BAs to the portal blood), and repressor NR0B2/SHP thereby indirectly inhibiting SLC10A2/ASBT (involved in BA uptake). In the intestine activates FGF15 expression and secretion leading to hepatic CYP7A1 repression; the function also involves the coordinated induction of hepatic KLB/beta-klotho expression. Transcriptional activation of FABP6/IBAP and SCD1 but not of ABCB11 is isoform-specific. Regulates transcription of liver UGT2B4 and SULT2A1 involved in BA detoxification; binding to the UGT2B4 promoter seems to imply a monomeric transactivation independent of RXRA. Modulates lipid homeostasis by activating liver NR0B2/SHP-mediated repression of SREBF1 isoform SREBP-1C (involved in de novo lipogenesis), expression of PLTP (involved in HDL formation), SCARB1 (involved in HDL hepatic uptake), APOE, APOC1, APOC4, VLDLR and SDC1 (involved in the hepatic uptake of LDL and IDL remnants), and inhibiting expression of MTTP (involved in VLDL assembly). Increases expression of APOC2 (promoting lipoprotein lipase activity implicated in triglyceride clearance). Transrepresses APOA1 probably involving a monomeric competition with NR2A1 for binding to a DR1 element. Also reduces triglyceride clearance by inhibiting expression of ANGPTL3 and APOC3 (both involved in inhibition of lipoprotein lipase). Involved in glucose homeostasis by modulating hepatic gluconeogenesis through activation of NR0B2/SHP-mediated repression of respective genes. Modulates glycogen synthesis (inducing phosphorylation of glycogen synthase kinase-3). Modulates glucose-stimulated insulin secretion and is involved in insulin resistance. Involved in intestinal innate immunity. Plays a role in protecting the distal small intestine against bacterial overgrowth and preservation of the epithelial barrier. Down-regulates inflammatory cytokine expression in several types of immune cells including macrophages and mononuclear cells. Mediates transrepression of TLR4-induced cytokine expression; the function seems to require its sumoylation and prevents N-CoR nuclear receptor corepressor clearance from target genes such as IL1B and NOS2. Involved in the TLR9-mediated protective mechanism in intestinal inflammation. Plays a anti-inflammatory role in liver inflammation; proposed to inhibit pro-inflammatory (but not antiapoptotic) NF-kappa-B signaling. In terms of biological role, activates transcription of IBAP and SDC1. The chain is Bile acid receptor (Nr1h4) from Mus musculus (Mouse).